We begin with the raw amino-acid sequence, 173 residues long: RNA pyrophosphohydrolase (173 aa).

A Nudix hydrolase domain is found at 6-149; sequence GFRANVGIII…KRDVYRKVMK (144 aa). Positions 38 to 59 match the Nudix box motif; sequence GGVDDGESAEEAMYRELYEEVG.

The protein belongs to the Nudix hydrolase family. RppH subfamily. The cofactor is a divalent metal cation.

Its function is as follows. Accelerates the degradation of transcripts by removing pyrophosphate from the 5'-end of triphosphorylated RNA, leading to a more labile monophosphorylated state that can stimulate subsequent ribonuclease cleavage. The chain is RNA pyrophosphohydrolase from Shewanella pealeana (strain ATCC 700345 / ANG-SQ1).